The following is a 297-amino-acid chain: Lipoyl synthase (297 aa).

Residues C37, C42, C48, C63, C67, C70, and S276 each coordinate [4Fe-4S] cluster. Residues W49–L265 form the Radical SAM core domain.

Belongs to the radical SAM superfamily. Lipoyl synthase family. Requires [4Fe-4S] cluster as cofactor.

Its subcellular location is the cytoplasm. The catalysed reaction is [[Fe-S] cluster scaffold protein carrying a second [4Fe-4S](2+) cluster] + N(6)-octanoyl-L-lysyl-[protein] + 2 oxidized [2Fe-2S]-[ferredoxin] + 2 S-adenosyl-L-methionine + 4 H(+) = [[Fe-S] cluster scaffold protein] + N(6)-[(R)-dihydrolipoyl]-L-lysyl-[protein] + 4 Fe(3+) + 2 hydrogen sulfide + 2 5'-deoxyadenosine + 2 L-methionine + 2 reduced [2Fe-2S]-[ferredoxin]. It participates in protein modification; protein lipoylation via endogenous pathway; protein N(6)-(lipoyl)lysine from octanoyl-[acyl-carrier-protein]: step 2/2. Functionally, catalyzes the radical-mediated insertion of two sulfur atoms into the C-6 and C-8 positions of the octanoyl moiety bound to the lipoyl domains of lipoate-dependent enzymes, thereby converting the octanoylated domains into lipoylated derivatives. This Rickettsia prowazekii (strain Madrid E) protein is Lipoyl synthase.